We begin with the raw amino-acid sequence, 344 residues long: sn-glycerol-3-phosphate import ATP-binding protein UgpC 2 (344 aa).

An ABC transporter domain is found at 4 to 234 (IELIDLKKNY…PETVFVAGFI (231 aa)). An ATP-binding site is contributed by 36-43 (GPSGCGKS).

This sequence belongs to the ABC transporter superfamily. sn-glycerol-3-phosphate importer (TC 3.A.1.1.3) family. The complex is composed of two ATP-binding proteins (UgpC), two transmembrane proteins (UgpA and UgpE) and a solute-binding protein (UgpB).

The protein localises to the cell inner membrane. The enzyme catalyses sn-glycerol 3-phosphate(out) + ATP + H2O = sn-glycerol 3-phosphate(in) + ADP + phosphate + H(+). Part of the ABC transporter complex UgpBAEC involved in sn-glycerol-3-phosphate (G3P) import. Responsible for energy coupling to the transport system. In Rhizobium johnstonii (strain DSM 114642 / LMG 32736 / 3841) (Rhizobium leguminosarum bv. viciae), this protein is sn-glycerol-3-phosphate import ATP-binding protein UgpC 2.